Consider the following 273-residue polypeptide: Putative phosphoenolpyruvate synthase regulatory protein (273 aa).

153 to 160 is a binding site for ADP; the sequence is GVSRCGKT.

This sequence belongs to the pyruvate, phosphate/water dikinase regulatory protein family. PSRP subfamily.

It carries out the reaction [pyruvate, water dikinase] + ADP = [pyruvate, water dikinase]-phosphate + AMP + H(+). It catalyses the reaction [pyruvate, water dikinase]-phosphate + phosphate + H(+) = [pyruvate, water dikinase] + diphosphate. Its function is as follows. Bifunctional serine/threonine kinase and phosphorylase involved in the regulation of the phosphoenolpyruvate synthase (PEPS) by catalyzing its phosphorylation/dephosphorylation. This chain is Putative phosphoenolpyruvate synthase regulatory protein, found in Pectobacterium atrosepticum (strain SCRI 1043 / ATCC BAA-672) (Erwinia carotovora subsp. atroseptica).